The following is a 464-amino-acid chain: L-cystine uptake protein TcyP (464 aa).

A run of 10 helical transmembrane segments spans residues 3-23 (TLLVGINVAVMLILVGVLYYM), 34-54 (VFTALGVGIIFGLILQFIYEP), 73-93 (YVKLLQMIVMPLILVSIISAF), 107-127 (GLIIGILILTTGIAAAVGIAA), 184-204 (PTSTISVVIFAAFIGIAFIGV), 225-245 (IVMRMVTLILRLTPYGVLALM), 263-283 (FVLASYVALIVMFVIHLLLIA), 347-367 (AGIYPAMLAMMVAPTVGIDPL), 371-391 (FILTLIAVVAISSFGVAGVGG), and 395-415 (FAALIVLSTMNLPIGIVALVI).

The protein belongs to the dicarboxylate/amino acid:cation symporter (DAACS) (TC 2.A.23) family.

It localises to the membrane. Its function is as follows. Mediates uptake of L-cystine, the oxidized form of L-cysteine. The polypeptide is L-cystine uptake protein TcyP (Bacillus thuringiensis subsp. konkukian (strain 97-27)).